We begin with the raw amino-acid sequence, 619 residues long: Interferon-activable protein 204 (619 aa).

The region spanning 1–88 (MVNEYKRIVL…AEILKKERSE (88 aa)) is the Pyrin domain. Residues 24 to 35 (LFKSLLARDLNL) carry the Nuclear export signal motif. A compositionally biased stretch (basic and acidic residues) spans 86 to 99 (RSEVTGETSLEKNG). A disordered region spans residues 86–223 (RSEVTGETSL…QNQNIPRGAV (138 aa)). A compositionally biased stretch (low complexity) spans 122-153 (TSATQEETSTAQAGTSTAQARTSTAQAGTSTA). Repeat copies occupy residues 134-140 (AGTSTAQ), 141-147 (ARTSTAQ), and 148-154 (AGTSTAQ). Positions 134–154 (AGTSTAQARTSTAQAGTSTAQ) are 3 X 7 AA tandem repeats of A-[GR]-T-S-T-A-Q. Positions 150–157 (TSTAQKRK) match the Nuclear localization signal motif. Residues 159–176 (MREEETGVKKSKAAKEPD) are compositionally biased toward basic and acidic residues. Low complexity predominate over residues 190–206 (SPILHSSSSASSNIPSA). Polar residues predominate over residues 207–218 (KNQKSQPQNQNI). HIN-200 domains lie at 213-413 (PQNQ…IKIS) and 417-615 (NVPK…MQVI). Residues 550–614 (KKTERNKFIY…RSVRHSYMQV (65 aa)) are interaction with ID2.

The protein belongs to the HIN-200 family. Interacts with UBTF. Interacts with RUNX2. Interacts with ID1, ID2 and ID3. Interacts with STING. Acetylated upon bacterial infection, leading to translocation from nucleus to cytoplasm and subsequent recruitment of STING to activate IFN-beta production. As to expression, present in osteoblasts (at protein level).

It localises to the nucleus. The protein resides in the nucleolus. Its subcellular location is the cytoplasm. Functionally, interferon-stimulated protein that plays a role in several biological processes including cell differentiation, autophagy and innate immunity. Cooperates with CGAS to sense dsDNA and activates the STING-dependent type I IFN pathway. Mechanistically, gets acetylated upon bacterial infection and then translocates from nucleus into cytoplasm to recruit STING for activation of TBK1-dependent IRF3 nuclear translocation and IFN-beta release. Inhibits the transcription of ribosomal RNA. May inhibit DNA binding by UBTF. Inhibits cell growth via p53/TP53 and RB1-dependent and independent pathways. Acts as a coactivator of RUNX2 during osteogenesis. May be involved in macrophage differentiation. Enables skeletal muscle and cardiac myocyte differentiation by sequestring Id proteins in the cytosol and promoting their ubiquitination and subsequent degradation. This is Interferon-activable protein 204 (Ifi204) from Mus musculus (Mouse).